Reading from the N-terminus, the 154-residue chain is SsrA-binding protein (154 aa).

This sequence belongs to the SmpB family.

It is found in the cytoplasm. Required for rescue of stalled ribosomes mediated by trans-translation. Binds to transfer-messenger RNA (tmRNA), required for stable association of tmRNA with ribosomes. tmRNA and SmpB together mimic tRNA shape, replacing the anticodon stem-loop with SmpB. tmRNA is encoded by the ssrA gene; the 2 termini fold to resemble tRNA(Ala) and it encodes a 'tag peptide', a short internal open reading frame. During trans-translation Ala-aminoacylated tmRNA acts like a tRNA, entering the A-site of stalled ribosomes, displacing the stalled mRNA. The ribosome then switches to translate the ORF on the tmRNA; the nascent peptide is terminated with the 'tag peptide' encoded by the tmRNA and targeted for degradation. The ribosome is freed to recommence translation, which seems to be the essential function of trans-translation. In Gluconacetobacter diazotrophicus (strain ATCC 49037 / DSM 5601 / CCUG 37298 / CIP 103539 / LMG 7603 / PAl5), this protein is SsrA-binding protein.